A 183-amino-acid polypeptide reads, in one-letter code: Adenine phosphoribosyltransferase (183 aa).

It belongs to the purine/pyrimidine phosphoribosyltransferase family. In terms of assembly, homodimer.

The protein resides in the cytoplasm. The enzyme catalyses AMP + diphosphate = 5-phospho-alpha-D-ribose 1-diphosphate + adenine. The protein operates within purine metabolism; AMP biosynthesis via salvage pathway; AMP from adenine: step 1/1. Its function is as follows. Catalyzes a salvage reaction resulting in the formation of AMP, that is energically less costly than de novo synthesis. In Shewanella sp. (strain ANA-3), this protein is Adenine phosphoribosyltransferase.